The sequence spans 469 residues: GDP-fucose protein O-fucosyltransferase 2 (469 aa).

A signal peptide spans 1-18 (MKFIIVLLLFFFFKVIDR). GDP-beta-L-fucose-binding positions include 56–60 (GEGFN), 277–279 (HLR), and 373–374 (RF). E57 functions as the Proton acceptor in the catalytic mechanism.

It belongs to the glycosyltransferase 68 family.

Its subcellular location is the endoplasmic reticulum. The catalysed reaction is L-seryl-[protein] + GDP-beta-L-fucose = 3-O-(alpha-L-fucosyl)-L-seryl-[protein] + GDP + H(+). It catalyses the reaction L-threonyl-[protein] + GDP-beta-L-fucose = 3-O-(alpha-L-fucosyl)-L-threonyl-[protein] + GDP + H(+). It functions in the pathway protein modification; protein glycosylation. Catalyzes the reaction that attaches fucose through an O-glycosidic linkage to a conserved serine or threonine residue in the consensus sequence C1-X-X-S/T-C2 of thrombospondin type I repeats (TSRs) where C1 and C2 are the first and second cysteines of the repeat, respectively. O-fucosylates sporozoite proteins CSP and TRAP. O-fucosylation regulates stability and intracellular trafficking of TRAP but not of CSP. Probably by regulating protein O-fucosylation, may play a role in parasite transmission to the mosquito vector and/or infection of the vertebrate host hepatocytes; however, POFUT2 involvement in transmission/infection is controversial. The protein is GDP-fucose protein O-fucosyltransferase 2 of Plasmodium falciparum (isolate NF54).